A 436-amino-acid chain; its full sequence is Gustatory receptor for sugar taste 61a (436 aa).

The Cytoplasmic segment spans residues 1-78; sequence MSRTSDDIRK…PQDVKFKVRS (78 aa). Residues 79-99 form a helical membrane-spanning segment; it reads IGLAVTGLFLLLGGMKTLVGA. The Extracellular segment spans residues 100 to 111; it reads NILFTEGLNAKN. The helical transmembrane segment at 112–132 threads the bilayer; sequence IVGLVFLIVGMVNWLNFVGFA. The Cytoplasmic portion of the chain corresponds to 133-164; the sequence is RSWSHIMLPWSSVDILMLFPPYKRGKRSLRSK. A helical membrane pass occupies residues 165 to 185; sequence VNVLALSVVVLAVGDHMLYYA. Residues 186-214 lie on the Extracellular side of the membrane; it reads SGYCSYSMHILQCHTNHSRITFGLYLEKE. A glycan (N-linked (GlcNAc...) asparagine) is linked at Asn-201. Residues 215–235 traverse the membrane as a helical segment; the sequence is FSDIMFIMPFNIFSMCYGFWL. At 236–237 the chain is on the cytoplasmic side; it reads NG. The helical transmembrane segment at 238 to 258 threads the bilayer; the sequence is AFTFLWNFMDIFIVMTSIGLA. At 259 to 304 the chain is on the extracellular side; the sequence is QRFQQFAARVGALEGRHVPEALWYDIRRDHIRLCELASLVEASMSN. A helical transmembrane segment spans residues 305–325; it reads IVFVSCANNVYVICNQALAIF. Residues 326–334 lie on the Cytoplasmic side of the membrane; that stretch reads TKLRHPINY. Residues 335–355 form a helical membrane-spanning segment; that stretch reads VYFWYSLIFLLARTSLVFMTA. Residues 356-436 lie on the Extracellular side of the membrane; the sequence is SKIHDASLLP…AKSHKGLRCA (81 aa).

The protein belongs to the insect chemoreceptor superfamily. Gustatory receptor (GR) family. Gr5a subfamily. Expressed in sweet sensing neurons of classical chemosensory sensilla, but also in two supersensitive neurons of atypical taste sensilla.

The protein resides in the cell membrane. Functionally, one of the few identified sugar gustatory receptors identified so far with glucose being its primary ligand and which mediates acceptance behavior. The chain is Gustatory receptor for sugar taste 61a (Gr61a) from Drosophila melanogaster (Fruit fly).